A 207-amino-acid chain; its full sequence is NADH-quinone oxidoreductase subunit C (207 aa).

It belongs to the complex I 30 kDa subunit family. As to quaternary structure, NDH-1 is composed of 14 different subunits. Subunits NuoB, C, D, E, F, and G constitute the peripheral sector of the complex.

It localises to the cell inner membrane. The enzyme catalyses a quinone + NADH + 5 H(+)(in) = a quinol + NAD(+) + 4 H(+)(out). Its function is as follows. NDH-1 shuttles electrons from NADH, via FMN and iron-sulfur (Fe-S) centers, to quinones in the respiratory chain. The immediate electron acceptor for the enzyme in this species is believed to be ubiquinone. Couples the redox reaction to proton translocation (for every two electrons transferred, four hydrogen ions are translocated across the cytoplasmic membrane), and thus conserves the redox energy in a proton gradient. The chain is NADH-quinone oxidoreductase subunit C from Bordetella pertussis (strain Tohama I / ATCC BAA-589 / NCTC 13251).